Here is a 180-residue protein sequence, read N- to C-terminus: FMN reductase (NADH) RutF (180 aa).

The protein belongs to the non-flavoprotein flavin reductase family. RutF subfamily.

It catalyses the reaction FMNH2 + NAD(+) = FMN + NADH + 2 H(+). Functionally, catalyzes the reduction of FMN to FMNH2 which is used to reduce pyrimidine by RutA via the Rut pathway. This is FMN reductase (NADH) RutF from Variovorax paradoxus (strain S110).